Here is a 434-residue protein sequence, read N- to C-terminus: Gamma-glutamyl phosphate reductase (434 aa).

Belongs to the gamma-glutamyl phosphate reductase family.

The protein resides in the cytoplasm. It catalyses the reaction L-glutamate 5-semialdehyde + phosphate + NADP(+) = L-glutamyl 5-phosphate + NADPH + H(+). Its pathway is amino-acid biosynthesis; L-proline biosynthesis; L-glutamate 5-semialdehyde from L-glutamate: step 2/2. Functionally, catalyzes the NADPH-dependent reduction of L-glutamate 5-phosphate into L-glutamate 5-semialdehyde and phosphate. The product spontaneously undergoes cyclization to form 1-pyrroline-5-carboxylate. This is Gamma-glutamyl phosphate reductase from Trichormus variabilis (strain ATCC 29413 / PCC 7937) (Anabaena variabilis).